Consider the following 98-residue polypeptide: NADH-ubiquinone oxidoreductase chain 4L (98 aa).

The next 3 membrane-spanning stretches (helical) occupy residues M1–I21, S28–I48, and A59–V79.

The protein belongs to the complex I subunit 4L family. Core subunit of respiratory chain NADH dehydrogenase (Complex I) which is composed of 45 different subunits.

Its subcellular location is the mitochondrion inner membrane. It catalyses the reaction a ubiquinone + NADH + 5 H(+)(in) = a ubiquinol + NAD(+) + 4 H(+)(out). Core subunit of the mitochondrial membrane respiratory chain NADH dehydrogenase (Complex I) which catalyzes electron transfer from NADH through the respiratory chain, using ubiquinone as an electron acceptor. Part of the enzyme membrane arm which is embedded in the lipid bilayer and involved in proton translocation. The polypeptide is NADH-ubiquinone oxidoreductase chain 4L (MT-ND4L) (Lagostrophus fasciatus (Banded hare-wallaby)).